Reading from the N-terminus, the 360-residue chain is tRNA-specific 2-thiouridylase MnmA (360 aa).

Residues 9-16 (AMSGGVDS) and L35 each bind ATP. Catalysis depends on C104, which acts as the Nucleophile. Residues C104 and C197 are joined by a disulfide bond. G128 is an ATP binding site. Residues 147 to 149 (KDQ) form an interaction with tRNA region. C197 acts as the Cysteine persulfide intermediate in catalysis.

Belongs to the MnmA/TRMU family.

It localises to the cytoplasm. The catalysed reaction is S-sulfanyl-L-cysteinyl-[protein] + uridine(34) in tRNA + AH2 + ATP = 2-thiouridine(34) in tRNA + L-cysteinyl-[protein] + A + AMP + diphosphate + H(+). Functionally, catalyzes the 2-thiolation of uridine at the wobble position (U34) of tRNA, leading to the formation of s(2)U34. The protein is tRNA-specific 2-thiouridylase MnmA of Salinispora tropica (strain ATCC BAA-916 / DSM 44818 / JCM 13857 / NBRC 105044 / CNB-440).